The sequence spans 201 residues: Small ribosomal subunit protein uS4c (201 aa).

Basic residues predominate over residues 1 to 14; the sequence is MSRYRGPRFKKIRR. The disordered stretch occupies residues 1–44; sequence MSRYRGPRFKKIRRLGALPGLTSKRPRAGSDPRNQSRSGKKSQY. The region spanning 89–152 is the S4 RNA-binding domain; that stretch reads MRLDNTLFRL…NSRTLVQNLL (64 aa).

This sequence belongs to the universal ribosomal protein uS4 family. In terms of assembly, part of the 30S ribosomal subunit. Contacts protein S5. The interaction surface between S4 and S5 is involved in control of translational fidelity.

The protein localises to the plastid. It is found in the chloroplast. In terms of biological role, one of the primary rRNA binding proteins, it binds directly to 16S rRNA where it nucleates assembly of the body of the 30S subunit. With S5 and S12 plays an important role in translational accuracy. The chain is Small ribosomal subunit protein uS4c (rps4) from Draba nemorosa (Woodland whitlowgrass).